The chain runs to 359 residues: 3-dehydroquinate synthase (359 aa).

NAD(+) contacts are provided by residues 69–74 (DGEAHK), 103–107 (GVIGD), 127–128 (TT), Lys-140, Lys-149, and 167–170 (TLDT). Zn(2+)-binding residues include Glu-182, His-245, and His-262.

This sequence belongs to the sugar phosphate cyclases superfamily. Dehydroquinate synthase family. It depends on Co(2+) as a cofactor. Zn(2+) is required as a cofactor. Requires NAD(+) as cofactor.

The protein localises to the cytoplasm. The enzyme catalyses 7-phospho-2-dehydro-3-deoxy-D-arabino-heptonate = 3-dehydroquinate + phosphate. It participates in metabolic intermediate biosynthesis; chorismate biosynthesis; chorismate from D-erythrose 4-phosphate and phosphoenolpyruvate: step 2/7. Functionally, catalyzes the conversion of 3-deoxy-D-arabino-heptulosonate 7-phosphate (DAHP) to dehydroquinate (DHQ). This chain is 3-dehydroquinate synthase, found in Methylococcus capsulatus (strain ATCC 33009 / NCIMB 11132 / Bath).